The following is a 195-amino-acid chain: Imidazoleglycerol-phosphate dehydratase (195 aa).

The protein belongs to the imidazoleglycerol-phosphate dehydratase family.

It is found in the cytoplasm. It catalyses the reaction D-erythro-1-(imidazol-4-yl)glycerol 3-phosphate = 3-(imidazol-4-yl)-2-oxopropyl phosphate + H2O. The protein operates within amino-acid biosynthesis; L-histidine biosynthesis; L-histidine from 5-phospho-alpha-D-ribose 1-diphosphate: step 6/9. This is Imidazoleglycerol-phosphate dehydratase from Desulfosudis oleivorans (strain DSM 6200 / JCM 39069 / Hxd3) (Desulfococcus oleovorans).